The following is a 401-amino-acid chain: Tumor necrosis factor receptor superfamily member 11B (401 aa).

The signal sequence occupies residues 1-21 (MNKWLCCALLVFLDIIEWTTQ). TNFR-Cys repeat units lie at residues 24–62 (FPPK…KTLC), 65–105 (CPDY…NRVC), 107–142 (CEEG…NTVC), and 145–185 (CPDG…DNVC). Intrachain disulfides connect Cys-41-Cys-54, Cys-44-Cys-62, Cys-65-Cys-80, Cys-83-Cys-97, Cys-87-Cys-105, Cys-107-Cys-118, Cys-124-Cys-142, and Cys-145-Cys-160. Asn-98 is a glycosylation site (N-linked (GlcNAc...) asparagine). 2 N-linked (GlcNAc...) asparagine glycosylation sites follow: Asn-165 and Asn-178. Cys-166 and Cys-185 are disulfide-bonded. Death domains are found at residues 198-269 (DVTL…MVKK) and 270-365 (IIQD…THSL). Asn-289 carries an N-linked (GlcNAc...) asparagine glycan.

In terms of assembly, homodimer. Interacts with TNFSF10 and TNFSF11.

The protein resides in the secreted. In terms of biological role, acts as a decoy receptor for TNFSF11/RANKL and thereby neutralizes its function in osteoclastogenesis. Inhibits the activation of osteoclasts and promotes osteoclast apoptosis in vitro. Bone homeostasis seems to depend on the local ratio between TNFSF11 and TNFRSF11B. May also play a role in preventing arterial calcification. May act as decoy receptor for TNFSF10/TRAIL and protect against apoptosis. TNFSF10/TRAIL binding blocks the inhibition of osteoclastogenesis. The chain is Tumor necrosis factor receptor superfamily member 11B (Tnfrsf11b) from Rattus norvegicus (Rat).